Reading from the N-terminus, the 421-residue chain is O-glycoside alpha-1,2-mannosyltransferase homolog 5 (421 aa).

The active-site Nucleophile is glutamate 318.

Belongs to the glycosyltransferase 15 family.

Its subcellular location is the cytoplasm. Its function is as follows. Probable mannosyltransferase involved in O-glycosylation of cell wall and secreted proteins. This is O-glycoside alpha-1,2-mannosyltransferase homolog 5 (omh5) from Schizosaccharomyces pombe (strain 972 / ATCC 24843) (Fission yeast).